The primary structure comprises 150 residues: Transcriptional repressor NrdR (150 aa).

Residues 3–34 (CPFCNFEESKVVDSRATDDNTTIRRRRECLNC) fold into a zinc finger. Positions 49 to 139 (VLVVKKDLAR…VYRQFKDINT (91 aa)) constitute an ATP-cone domain.

The protein belongs to the NrdR family. The cofactor is Zn(2+).

In terms of biological role, negatively regulates transcription of bacterial ribonucleotide reductase nrd genes and operons by binding to NrdR-boxes. The chain is Transcriptional repressor NrdR from Clostridium botulinum (strain Eklund 17B / Type B).